Here is a 342-residue protein sequence, read N- to C-terminus: S-adenosylmethionine:tRNA ribosyltransferase-isomerase (342 aa).

Belongs to the QueA family. Monomer.

The protein resides in the cytoplasm. The catalysed reaction is 7-aminomethyl-7-carbaguanosine(34) in tRNA + S-adenosyl-L-methionine = epoxyqueuosine(34) in tRNA + adenine + L-methionine + 2 H(+). It functions in the pathway tRNA modification; tRNA-queuosine biosynthesis. Transfers and isomerizes the ribose moiety from AdoMet to the 7-aminomethyl group of 7-deazaguanine (preQ1-tRNA) to give epoxyqueuosine (oQ-tRNA). The sequence is that of S-adenosylmethionine:tRNA ribosyltransferase-isomerase from Novosphingobium aromaticivorans (strain ATCC 700278 / DSM 12444 / CCUG 56034 / CIP 105152 / NBRC 16084 / F199).